We begin with the raw amino-acid sequence, 532 residues long: Egg peptide speract receptor (532 aa).

The first 30 residues, 1–30 (MGLPMMLQQYCWAACLVICIAISSVDDVGA), serve as a signal peptide directing secretion. Over 31–491 (EQNYGREAVE…VVCEGSTAPP (461 aa)) the chain is Extracellular. SRCR domains follow at residues 43 to 144 (IRLI…VECL), 153 to 257 (LRMI…VVCK), 264 to 366 (IRLM…VVCA), and 382 to 485 (VRIV…VVCE). Intrachain disulfides connect C68–C133, C81–C143, C112–C122, C178–C244, C191–C256, C223–C233, C289–C355, C302–C365, C335–C345, C406–C475, C419–C484, and C454–C465. N-linked (GlcNAc...) asparagine glycans are attached at residues N78 and N115. N-linked (GlcNAc...) asparagine glycosylation occurs at N459. The helical transmembrane segment at 492 to 520 (SGMSIAVIGGAAGGGVAGLAVAAFAFYYI) threads the bilayer. The Cytoplasmic segment spans residues 521–532 (KFVKPAGGGGQA).

The protein localises to the membrane. Its function is as follows. Receptor for the egg peptide speract. The sequence is that of Egg peptide speract receptor from Strongylocentrotus purpuratus (Purple sea urchin).